Reading from the N-terminus, the 145-residue chain is Arginine repressor (145 aa).

It belongs to the ArgR family.

The protein resides in the cytoplasm. Its pathway is amino-acid biosynthesis; L-arginine biosynthesis [regulation]. Its function is as follows. Regulates arginine biosynthesis genes. The chain is Arginine repressor from Streptococcus pyogenes serotype M3 (strain ATCC BAA-595 / MGAS315).